A 439-amino-acid polypeptide reads, in one-letter code: Xylose isomerase (439 aa).

Catalysis depends on residues His101 and Asp104. Residues Glu232, Glu268, His271, Asp296, Asp307, Asp309, and Asp339 each contribute to the Mg(2+) site.

The protein belongs to the xylose isomerase family. As to quaternary structure, homotetramer. Requires Mg(2+) as cofactor.

It is found in the cytoplasm. The catalysed reaction is alpha-D-xylose = alpha-D-xylulofuranose. The polypeptide is Xylose isomerase (Histophilus somni (strain 2336) (Haemophilus somnus)).